Consider the following 166-residue polypeptide: Regulator of ribonuclease activity A (166 aa).

The protein belongs to the RraA family. As to quaternary structure, homotrimer. Binds to both RNA-binding sites in the C-terminal region of Rne and to RhlB.

The protein resides in the cytoplasm. Its function is as follows. Globally modulates RNA abundance by binding to RNase E (Rne) and regulating its endonucleolytic activity. Can modulate Rne action in a substrate-dependent manner by altering the composition of the degradosome. Modulates RNA-binding and helicase activities of the degradosome. This chain is Regulator of ribonuclease activity A, found in Pasteurella multocida (strain Pm70).